The following is a 158-amino-acid chain: NAD(P)H-quinone oxidoreductase subunit J, chloroplastic (158 aa).

This sequence belongs to the complex I 30 kDa subunit family. In terms of assembly, NDH is composed of at least 16 different subunits, 5 of which are encoded in the nucleus.

The protein resides in the plastid. The protein localises to the chloroplast thylakoid membrane. The catalysed reaction is a plastoquinone + NADH + (n+1) H(+)(in) = a plastoquinol + NAD(+) + n H(+)(out). It catalyses the reaction a plastoquinone + NADPH + (n+1) H(+)(in) = a plastoquinol + NADP(+) + n H(+)(out). Functionally, NDH shuttles electrons from NAD(P)H:plastoquinone, via FMN and iron-sulfur (Fe-S) centers, to quinones in the photosynthetic chain and possibly in a chloroplast respiratory chain. The immediate electron acceptor for the enzyme in this species is believed to be plastoquinone. Couples the redox reaction to proton translocation, and thus conserves the redox energy in a proton gradient. This Fagopyrum esculentum subsp. ancestrale (Wild buckwheat) protein is NAD(P)H-quinone oxidoreductase subunit J, chloroplastic.